The following is a 76-amino-acid chain: Dermaseptin-S7 (76 aa).

The signal sequence occupies residues methionine 1 to cysteine 22. Residues glutamate 23–arginine 45 constitute a propeptide that is removed on maturation. The tract at residues glutamate 25–arginine 45 is disordered. The segment covering glutamate 30–serine 41 has biased composition (acidic residues). Glutamine 73 is modified (glutamine amide). Positions glutamate 75–glutamine 76 are excised as a propeptide.

This sequence belongs to the frog skin active peptide (FSAP) family. Dermaseptin subfamily. In terms of tissue distribution, expressed by the skin glands.

The protein resides in the secreted. Functionally, antimicrobial peptide. The chain is Dermaseptin-S7 from Phyllomedusa sauvagei (Sauvage's leaf frog).